The primary structure comprises 107 residues: uncharacterized protein (107 aa).

Helical transmembrane passes span 14 to 34 (YLAEFLLGLTALFGLYLIVAW) and 68 to 88 (FFVFLGYVAHIIPFTAFLVPI).

The protein resides in the cell membrane. This is an uncharacterized protein from Haemophilus influenzae (strain ATCC 51907 / DSM 11121 / KW20 / Rd).